The primary structure comprises 262 residues: Probable lipoprotein EnvF (262 aa).

The signal sequence occupies residues 1–25 (MNKIHVTYKNLLLPITFIAATLISA). Cysteine 26 carries N-palmitoyl cysteine lipidation. The S-diacylglycerol cysteine moiety is linked to residue cysteine 26. A disordered region spans residues 227–262 (EAEKAQQLVEQSRKDIESQRKKAAGKMNEIQQTFKK). Residues 237–246 (QSRKDIESQR) are compositionally biased toward basic and acidic residues.

It is found in the cell membrane. The sequence is that of Probable lipoprotein EnvF (envF) from Salmonella typhimurium (strain LT2 / SGSC1412 / ATCC 700720).